The primary structure comprises 255 residues: 5'-nucleotidase SurE (255 aa).

Residues aspartate 8, aspartate 9, serine 39, and asparagine 95 each contribute to the a divalent metal cation site.

Belongs to the SurE nucleotidase family. It depends on a divalent metal cation as a cofactor.

It localises to the cytoplasm. It carries out the reaction a ribonucleoside 5'-phosphate + H2O = a ribonucleoside + phosphate. In terms of biological role, nucleotidase that shows phosphatase activity on nucleoside 5'-monophosphates. This Thermosipho africanus (strain TCF52B) protein is 5'-nucleotidase SurE.